Consider the following 179-residue polypeptide: Small ribosomal subunit protein uS5 (179 aa).

The region spanning 22 to 85 is the S5 DRBM domain; it reads MIEKLVAVNR…EYARKRMANV (64 aa).

The protein belongs to the universal ribosomal protein uS5 family. In terms of assembly, part of the 30S ribosomal subunit. Contacts proteins S4 and S8.

Its function is as follows. With S4 and S12 plays an important role in translational accuracy. In terms of biological role, located at the back of the 30S subunit body where it stabilizes the conformation of the head with respect to the body. This is Small ribosomal subunit protein uS5 from Xylella fastidiosa (strain M12).